The primary structure comprises 137 residues: MARVLNVEIPNHKRIVIALCSIFGIGKSLATEIVEKTAKLQEEKFGKKFPILTENTKVKEINEEVLQVIRDVAKTYKTEGDLHREVQSNIKRLIEIKCYRGIRHRKGLPVRGQVTQKNARTRKGPRKTIMAKKDKGK.

Positions 114–137 (VTQKNARTRKGPRKTIMAKKDKGK) are disordered. Basic residues predominate over residues 119 to 130 (ARTRKGPRKTIM).

Belongs to the universal ribosomal protein uS13 family. As to quaternary structure, part of the 30S ribosomal subunit. Forms a loose heterodimer with protein S19. Forms two bridges to the 50S subunit in the 70S ribosome.

Functionally, located at the top of the head of the 30S subunit, it contacts several helices of the 16S rRNA. In the 70S ribosome it contacts the 23S rRNA (bridge B1a) and protein L5 of the 50S subunit (bridge B1b), connecting the 2 subunits; these bridges are implicated in subunit movement. Contacts the tRNAs in the A and P-sites. The protein is Small ribosomal subunit protein uS13 of Mesomycoplasma hyopneumoniae (strain 232) (Mycoplasma hyopneumoniae).